Reading from the N-terminus, the 104-residue chain is Protein SMALL AUXIN UP-REGULATED RNA 12 (104 aa).

It belongs to the ARG7 family. In terms of tissue distribution, expressed in flowers and etiolated hypocotyls.

It is found in the cell membrane. Provide a mechanistic link between auxin and plasma membrane H(+)-ATPases (PM H(+)-ATPases, e.g. AHA1 and AHA2), and triggers PM H(+)-ATPases activity by promoting phosphorylation of their C-terminal autoinhibitory domain as a result of PP2C-D subfamily of type 2C phosphatases inhibition, thus leading to the acidification of the apoplast and the facilitation of solutes and water uptake to drive cell expansion. Triggers plant growth probably by promoting cell elongation. Regulates branch angles and bending. The polypeptide is Protein SMALL AUXIN UP-REGULATED RNA 12 (Arabidopsis thaliana (Mouse-ear cress)).